Consider the following 478-residue polypeptide: Zinc metalloproteinase/disintegrin VMP-II (478 aa).

The N-terminal stretch at 1–20 (MIQVLLVTICLAVFPYQGSS) is a signal peptide. Positions 21–190 (IILESGNVND…KASQLNLTPE (170 aa)) are excised as a propeptide. In terms of domain architecture, Peptidase M12B spans 197-393 (RYIELVIVAD…HNPQCMLNEP (197 aa)). E200 and D284 together coordinate Ca(2+). Disulfide bonds link C308–C388, C348–C372, and C350–C355. A Zn(2+)-binding site is contributed by H333. E334 is an active-site residue. Zn(2+) contacts are provided by H337 and H343. Residues C388 and N391 each contribute to the Ca(2+) site. Positions 394-405 (LGTDTVSRNELL) are excised as a propeptide. In terms of domain architecture, Disintegrin spans 414–478 (GSPANPCCDA…ADCPRNRFHA (65 aa)). Cystine bridges form between C420–C443, C434–C440, C439–C464, and C452–C471. A Cell attachment site motif is present at residues 456–458 (RGD).

It belongs to the venom metalloproteinase (M12B) family. P-II subfamily. P-IIe sub-subfamily. As to quaternary structure, heterodimer; disulfide-linked (disintegrin). Zn(2+) is required as a cofactor. In terms of tissue distribution, expressed by the venom gland.

It is found in the secreted. Functionally, impairs hemostasis in the envenomed animal. This recombinant protein inhibits ADP-induced platelet aggregation in whole human blood and this effect is concentration-dependent with an IC(50) of 34 nM. The polypeptide is Zinc metalloproteinase/disintegrin VMP-II (Crotalus viridis viridis (Prairie rattlesnake)).